Reading from the N-terminus, the 206-residue chain is Small ribosomal subunit protein uS4 (206 aa).

The S4 RNA-binding domain occupies 98 to 158; sequence RRLDNVVFRL…EKSRSMELIK (61 aa).

This sequence belongs to the universal ribosomal protein uS4 family. In terms of assembly, part of the 30S ribosomal subunit. Contacts protein S5. The interaction surface between S4 and S5 is involved in control of translational fidelity.

In terms of biological role, one of the primary rRNA binding proteins, it binds directly to 16S rRNA where it nucleates assembly of the body of the 30S subunit. With S5 and S12 plays an important role in translational accuracy. This Thermoanaerobacter pseudethanolicus (strain ATCC 33223 / 39E) (Clostridium thermohydrosulfuricum) protein is Small ribosomal subunit protein uS4.